Here is a 449-residue protein sequence, read N- to C-terminus: Chromosomal replication initiator protein DnaA (449 aa).

The segment at Met-1–Thr-83 is domain I, interacts with DnaA modulators. Residues Glu-77 to Leu-114 form a disordered region. Residues Thr-83–Ser-112 form a domain II region. Positions Ala-89–Ala-99 are enriched in low complexity. Positions Asn-113 to Ala-329 are domain III, AAA+ region. ATP contacts are provided by Gly-157, Gly-159, Lys-160, and Thr-161. The tract at residues Gln-330–Thr-449 is domain IV, binds dsDNA.

The protein belongs to the DnaA family. Oligomerizes as a right-handed, spiral filament on DNA at oriC.

The protein localises to the cytoplasm. In terms of biological role, plays an essential role in the initiation and regulation of chromosomal replication. ATP-DnaA binds to the origin of replication (oriC) to initiate formation of the DNA replication initiation complex once per cell cycle. Binds the DnaA box (a 9 base pair repeat at the origin) and separates the double-stranded (ds)DNA. Forms a right-handed helical filament on oriC DNA; dsDNA binds to the exterior of the filament while single-stranded (ss)DNA is stabiized in the filament's interior. The ATP-DnaA-oriC complex binds and stabilizes one strand of the AT-rich DNA unwinding element (DUE), permitting loading of DNA polymerase. After initiation quickly degrades to an ADP-DnaA complex that is not apt for DNA replication. Binds acidic phospholipids. The sequence is that of Chromosomal replication initiator protein DnaA from Halorhodospira halophila (strain DSM 244 / SL1) (Ectothiorhodospira halophila (strain DSM 244 / SL1)).